The following is a 717-amino-acid chain: Nuclear factor of activated T-cells, cytoplasmic 1 (717 aa).

A disordered region spans residues 1 to 38; sequence MPNTSFPVPSKFPLGPPAAVCGSGETLRPAPPSGGTMK. The tract at residues 120-125 is calcineurin-binding; the sequence is PRIEIT. A transactivation domain A (TAD-A) region spans residues 128–220; it reads LGLHHGSGQF…CVSPKTTDPE (93 aa). A disordered region spans residues 202–298; that stretch reads PQTSPWQSPC…PHGSPRVSVT (97 aa). Polar residues predominate over residues 203 to 216; it reads QTSPWQSPCVSPKT. Repeat copies occupy residues 205 to 221 and 235 to 251. The segment at 205–300 is 3 X SP repeats; sequence SPWQSPCVSP…GSPRVSVTED (96 aa). A phosphoserine mark is found at Ser-235 and Ser-239. Residues 238–250 show a composition bias toward polar residues; that stretch reads HSPSTSPRASITE. Residue Ser-247 is modified to Phosphoserine; by PKA. The Nuclear localization signal signature appears at 267 to 269; it reads KRK. Residues Ser-271 and Ser-296 each carry the phosphoserine; by PKA modification. Repeat unit 3 spans residues 284–300; it reads SPTPSPHGSPRVSVTED. The short motif at 312 to 323 is the Nuclear export signal element; that stretch reads SAIVAAINALTT. Residues 411–593 enclose the RHD domain; sequence PSLPALDWQL…NPIECSQRSA (183 aa). Residues 440 to 447 mediate DNA binding; sequence RAHYETEG. The Nuclear localization signal signature appears at 683 to 685; sequence KRK.

In terms of assembly, member of the multicomponent NFATC transcription complex that consists of at least two components, a pre-existing cytoplasmic component NFATC2 and an inducible nuclear component NFATC1. Other members such as NFATC4, NFATC3 or members of the activating protein-1 family, MAF, GATA4 and Cbp/p300 can also bind the complex. NFATC proteins bind to DNA as monomers. Interacts with HOMER2 and HOMER3; this interaction may compete with calcineurin/PPP3CA-binding and hence prevent NFATC1 dephosphorylation and activation. Interacts with TLE6/GRG6. Phosphorylated by NFATC-kinase and GSK3B; phosphorylation induces NFATC1 nuclear exit and dephosphorylation by calcineurin promotes nuclear import. Phosphorylation by PKA and DYRK2 negatively modulates nuclear accumulation, and promotes subsequent phosphorylation by GSK3B or casein kinase 1. As to expression, expressed in the submandibular gland (at protein level). Expressed in basal epidermal cells (at protein level). Expressed in spleen, skeletal muscle and skin. Express in the lung and thymus. Weakly expressed in heart, brain, liver and kidney. Not expressed in testis. Expressed in osteoclasts. Also expressed during TNFSF11/RANKL-induced differentiation of bone marrow-derived macrophages to osteoclasts.

Its subcellular location is the cytoplasm. The protein localises to the nucleus. Its function is as follows. Plays a role in the inducible expression of cytokine genes in T-cells, especially in the induction of the IL-2 or IL-4 gene transcription. Also controls gene expression in embryonic cardiac cells. Could regulate not only the activation and proliferation but also the differentiation and programmed death of T-lymphocytes as well as lymphoid and non-lymphoid cells. Required for osteoclastogenesis and regulates many genes important for osteoclast differentiation and function. The chain is Nuclear factor of activated T-cells, cytoplasmic 1 (Nfatc1) from Mus musculus (Mouse).